The following is a 131-amino-acid chain: Small ribosomal subunit protein uS11 (131 aa).

Belongs to the universal ribosomal protein uS11 family. Part of the 30S ribosomal subunit. Interacts with proteins S7 and S18. Binds to IF-3.

Located on the platform of the 30S subunit, it bridges several disparate RNA helices of the 16S rRNA. Forms part of the Shine-Dalgarno cleft in the 70S ribosome. The polypeptide is Small ribosomal subunit protein uS11 (Endomicrobium trichonymphae).